The chain runs to 69 residues: Guanine nucleotide-binding protein G(I)/G(S)/G(O) subunit gamma-T2 (69 aa).

Positions 47–69 (DPLLKGIPEDKNPFKEKGGCMIS) are disordered. Residues 53-69 (IPEDKNPFKEKGGCMIS) show a composition bias toward basic and acidic residues. Residue C66 is modified to Cysteine methyl ester. The S-farnesyl cysteine moiety is linked to residue C66. The propeptide at 67–69 (MIS) is removed in mature form.

The protein belongs to the G protein gamma family. G proteins are composed of 3 units, alpha, beta and gamma.

The protein localises to the cell membrane. Functionally, guanine nucleotide-binding proteins (G proteins) are involved as a modulator or transducer in various transmembrane signaling systems. The beta and gamma chains are required for the GTPase activity, for replacement of GDP by GTP, and for G protein-effector interaction. This is Guanine nucleotide-binding protein G(I)/G(S)/G(O) subunit gamma-T2 (GNGT2) from Canis lupus familiaris (Dog).